Here is a 217-residue protein sequence, read N- to C-terminus: MSGLSESAKLVKEALEQRGLETPMRPNNVSREEKKEKIEHHMREILGLLQLDLTDDSLEETPHRIAKMYVDEIFSGLDYSNFPKITVIENKMNVSEMVRVKDITVTSTCEHHLVTIDGKAAVAYIPRGKIIGLSKINRIVRFFAQRPQVQERMTQQILVALQTLLESDDVAVTIDATHYCVKSRGVMDATSETTTTALGGIFKSNPATRAEFLHGLR.

Residues Cys109, His112, and Cys180 each contribute to the Zn(2+) site.

The protein belongs to the GTP cyclohydrolase I family. Toroid-shaped homodecamer, composed of two pentamers of five dimers.

It carries out the reaction GTP + H2O = 7,8-dihydroneopterin 3'-triphosphate + formate + H(+). It functions in the pathway cofactor biosynthesis; 7,8-dihydroneopterin triphosphate biosynthesis; 7,8-dihydroneopterin triphosphate from GTP: step 1/1. The sequence is that of GTP cyclohydrolase 1 from Vibrio campbellii (strain ATCC BAA-1116).